The sequence spans 92 residues: Small nuclear ribonucleoprotein E (92 aa).

Residues 18–92 (INLIFRYLQN…NITLLQSVSN (75 aa)) form the Sm domain.

This sequence belongs to the snRNP Sm proteins family. As to quaternary structure, core component of the spliceosomal U1, U2, U4 and U5 small nuclear ribonucleoproteins (snRNPs), the building blocks of the spliceosome. Most spliceosomal snRNPs contain a common set of Sm proteins, SNRPB, SNRPD1, SNRPD2, SNRPD3, SNRPE, SNRPF and SNRPG that assemble in a heptameric protein ring on the Sm site of the small nuclear RNA to form the core snRNP. Component of the U1 snRNP. The U1 snRNP is composed of the U1 snRNA and the 7 core Sm proteins SNRPB, SNRPD1, SNRPD2, SNRPD3, SNRPE, SNRPF and SNRPG, and at least three U1 snRNP-specific proteins SNRNP70/U1-70K, SNRPA/U1-A and SNRPC/U1-C. Component of the U4/U6-U5 tri-snRNP complex composed of the U4, U6 and U5 snRNAs and at least PRPF3, PRPF4, PRPF6, PRPF8, PRPF31, SNRNP200, TXNL4A, SNRNP40, SNRPB, SNRPD1, SNRPD2, SNRPD3, SNRPE, SNRPF, SNRPG, DDX23, CD2BP2, PPIH, SNU13, EFTUD2, SART1 and USP39, plus LSM2, LSM3, LSM4, LSM5, LSM6, LSM7 and LSM8. Component of the U7 snRNP complex, or U7 Sm protein core complex, that is composed of the U7 snRNA and at least LSM10, LSM11, SNRPB, SNRPD3, SNRPE, SNRPF and SNRPG; the complex does not contain SNRPD1 and SNRPD2. Component of the minor spliceosome, which splices U12-type introns. Part of the SMN-Sm complex that contains SMN1, GEMIN2/SIP1, DDX20/GEMIN3, GEMIN4, GEMIN5, GEMIN6, GEMIN7, GEMIN8, STRAP/UNRIP and the Sm proteins SNRPB, SNRPD1, SNRPD2, SNRPD3, SNRPE, SNRPF and SNRPG; catalyzes core snRNPs assembly. Forms a 6S pICln-Sm complex composed of CLNS1A/pICln, SNRPD1, SNRPD2, SNRPE, SNRPF and SNRPG; ring-like structure where CLNS1A/pICln mimics additional Sm proteins and which is unable to assemble into the core snRNP. Interacts with SMN1; the interaction is direct. Interacts with GEMIN2 (via N-terminus); the interaction is direct. Interacts with SNRPF; the interaction is direct. Interacts with SNRPG; the interaction is direct.

The protein localises to the cytoplasm. The protein resides in the cytosol. It localises to the nucleus. In terms of biological role, plays a role in pre-mRNA splicing as a core component of the spliceosomal U1, U2, U4 and U5 small nuclear ribonucleoproteins (snRNPs), the building blocks of the spliceosome. Component of both the pre-catalytic spliceosome B complex and activated spliceosome C complexes. As a component of the minor spliceosome, involved in the splicing of U12-type introns in pre-mRNAs. As part of the U7 snRNP it is involved in histone 3'-end processing. This is Small nuclear ribonucleoprotein E (SNRPE) from Bos taurus (Bovine).